Reading from the N-terminus, the 428-residue chain is Histidinol dehydrogenase (428 aa).

Positions 124, 186, and 209 each coordinate NAD(+). The substrate site is built by Ser233, Gln255, and His258. Zn(2+) is bound by residues Gln255 and His258. Catalysis depends on proton acceptor residues Glu322 and His323. Positions 323, 356, 410, and 415 each coordinate substrate. Asp356 contributes to the Zn(2+) binding site. His415 lines the Zn(2+) pocket.

This sequence belongs to the histidinol dehydrogenase family. Zn(2+) is required as a cofactor.

The catalysed reaction is L-histidinol + 2 NAD(+) + H2O = L-histidine + 2 NADH + 3 H(+). The protein operates within amino-acid biosynthesis; L-histidine biosynthesis; L-histidine from 5-phospho-alpha-D-ribose 1-diphosphate: step 9/9. In terms of biological role, catalyzes the sequential NAD-dependent oxidations of L-histidinol to L-histidinaldehyde and then to L-histidine. The polypeptide is Histidinol dehydrogenase (Bacteroides fragilis (strain ATCC 25285 / DSM 2151 / CCUG 4856 / JCM 11019 / LMG 10263 / NCTC 9343 / Onslow / VPI 2553 / EN-2)).